Consider the following 208-residue polypeptide: Small ribosomal subunit protein uS4 (208 aa).

The region spanning 99–165 (RRLDNVVFQL…PRLKEILSSL (67 aa)) is the S4 RNA-binding domain.

This sequence belongs to the universal ribosomal protein uS4 family. As to quaternary structure, part of the 30S ribosomal subunit. Contacts protein S5. The interaction surface between S4 and S5 is involved in control of translational fidelity.

Functionally, one of the primary rRNA binding proteins, it binds directly to 16S rRNA where it nucleates assembly of the body of the 30S subunit. With S5 and S12 plays an important role in translational accuracy. This chain is Small ribosomal subunit protein uS4, found in Desulfitobacterium hafniense (strain Y51).